Consider the following 271-residue polypeptide: Sec-independent protein translocase protein TatC (271 aa).

A run of 6 helical transmembrane segments spans residues 35-55 (IIWT…WHEQ), 93-113 (AFIA…WLFI), 124-144 (YVLP…VFGY), 178-198 (IILG…LALM), 213-233 (SILV…IMNM), and 234-254 (CVFA…AFLV).

It belongs to the TatC family. In terms of assembly, forms a complex with TatA.

It is found in the cell inner membrane. In terms of biological role, part of the twin-arginine translocation (Tat) system that transports large folded proteins containing a characteristic twin-arginine motif in their signal peptide across membranes. This Koribacter versatilis (strain Ellin345) protein is Sec-independent protein translocase protein TatC.